Consider the following 289-residue polypeptide: Four and a half LIM domains protein 3 (289 aa).

Ser-2 carries the post-translational modification N-acetylserine. The C4-type zinc-finger motif lies at 7 to 31; sequence CAKCNESLYGRKYIQTDSGPYCVPC. LIM zinc-binding domains are found at residues 40 to 92 and 101 to 153; these read CAEC…CNEC and CSAC…CVPC. Lys-157 carries the N6-acetyllysine modification. LIM zinc-binding domains are found at residues 162–212 and 221–275; these read CARC…CVAC and CSSC…FVPD. The residue at position 244 (Lys-244) is an N6-acetyllysine.

As to quaternary structure, interacts with SOX15; the interaction recruits FHL3 to FOXK1 promoters where it acts as a transcriptional coactivator of FOXK1. As to expression, expressed in myogenic progenitor cells (at protein level). Expressed in skeletal striated muscle and the heart. Expressed to a lesser extent, in lung, and kidney. Expressed in skin and skeletal muscles such as the masseter, tongue, tibialis anterior and plantar muscles.

The protein resides in the nucleus. It is found in the cytoplasm. Recruited by SOX15 to FOXK1 promoters where it acts as a transcriptional coactivator of FOXK1. The protein is Four and a half LIM domains protein 3 (Fhl3) of Mus musculus (Mouse).